The chain runs to 183 residues: Adenine phosphoribosyltransferase (183 aa).

Belongs to the purine/pyrimidine phosphoribosyltransferase family. In terms of assembly, homodimer.

Its subcellular location is the cytoplasm. The enzyme catalyses AMP + diphosphate = 5-phospho-alpha-D-ribose 1-diphosphate + adenine. Its pathway is purine metabolism; AMP biosynthesis via salvage pathway; AMP from adenine: step 1/1. Its function is as follows. Catalyzes a salvage reaction resulting in the formation of AMP, that is energically less costly than de novo synthesis. This Shewanella pealeana (strain ATCC 700345 / ANG-SQ1) protein is Adenine phosphoribosyltransferase.